A 153-amino-acid chain; its full sequence is Insulin-like growth factor 1 (153 aa).

A b region spans residues 49–77; the sequence is GPETLCGAELVDALQFVCGDRGFYFNKPT. Intrachain disulfides connect Cys-54/Cys-96, Cys-66/Cys-109, and Cys-95/Cys-100. A c region spans residues 78 to 89; sequence GYGSSSRRAPQT. The segment at 90–110 is a; the sequence is GIVDECCFRSCDLRRLEMYCA. The interval 111–118 is d; it reads PLKPAKSA. Residues 119–153 constitute a propeptide, e peptide; that stretch reads RSVRAQRHTDMPKAQKEVHLKNASRGSAGNKNYRM. The segment at 120–153 is disordered; it reads SVRAQRHTDMPKAQKEVHLKNASRGSAGNKNYRM. A compositionally biased stretch (basic and acidic residues) spans 125 to 138; that stretch reads RHTDMPKAQKEVHL. Polar residues predominate over residues 142–153; that stretch reads SRGSAGNKNYRM.

The protein belongs to the insulin family. As to quaternary structure, forms a ternary complex with IGFR1 and ITGAV:ITGB3. Forms a ternary complex with IGFR1 and ITGA6:ITGB4. Forms a ternary complex with IGFBP3 and ALS.

The protein localises to the secreted. Functionally, the insulin-like growth factors, isolated from plasma, are structurally and functionally related to insulin but have a much higher growth-promoting activity. May be a physiological regulator of [1-14C]-2-deoxy-D-glucose (2DG) transport and glycogen synthesis in osteoblasts. Stimulates glucose transport in bone-derived osteoblastic (PyMS) cells and is effective at much lower concentrations than insulin, not only regarding glycogen and DNA synthesis but also with regard to enhancing glucose uptake. May play a role in synapse maturation. Ca(2+)-dependent exocytosis of IGF1 is required for sensory perception of smell in the olfactory bulb. Acts as a ligand for IGF1R. Binds to the alpha subunit of IGF1R, leading to the activation of the intrinsic tyrosine kinase activity which autophosphorylates tyrosine residues in the beta subunit thus initiating a cascade of down-stream signaling events leading to activation of the PI3K-AKT/PKB and the Ras-MAPK pathways. Binds to integrins ITGAV:ITGB3 and ITGA6:ITGB4. Its binding to integrins and subsequent ternary complex formation with integrins and IGFR1 are essential for IGF1 signaling. Induces the phosphorylation and activation of IGFR1, MAPK3/ERK1, MAPK1/ERK2 and AKT1. As part of the MAPK/ERK signaling pathway, acts as a negative regulator of apoptosis in cardiomyocytes via promotion of STUB1/CHIP-mediated ubiquitination and degradation of ICER-type isoforms of CREM. This chain is Insulin-like growth factor 1, found in Canis lupus familiaris (Dog).